Consider the following 625-residue polypeptide: DNA mismatch repair protein MutL (625 aa).

Belongs to the DNA mismatch repair MutL/HexB family.

This protein is involved in the repair of mismatches in DNA. It is required for dam-dependent methyl-directed DNA mismatch repair. May act as a 'molecular matchmaker', a protein that promotes the formation of a stable complex between two or more DNA-binding proteins in an ATP-dependent manner without itself being part of a final effector complex. This Azorhizobium caulinodans (strain ATCC 43989 / DSM 5975 / JCM 20966 / LMG 6465 / NBRC 14845 / NCIMB 13405 / ORS 571) protein is DNA mismatch repair protein MutL.